Reading from the N-terminus, the 426-residue chain is S-adenosylmethionine synthase (426 aa).

His22 is an ATP binding site. Mg(2+) is bound at residue Asp24. Residue Glu50 participates in K(+) binding. L-methionine is bound by residues Glu63 and Gln106. Residues 106–116 (QSPDISQGVTA) form a flexible loop region. ATP contacts are provided by residues 181 to 183 (DGK), 257 to 258 (KF), Asp266, 272 to 273 (RK), Ala289, and Lys293. Asp266 contacts L-methionine. Residue Lys297 coordinates L-methionine.

The protein belongs to the AdoMet synthase family. In terms of assembly, homotetramer; dimer of dimers. Mg(2+) is required as a cofactor. It depends on K(+) as a cofactor.

It is found in the cytoplasm. It carries out the reaction L-methionine + ATP + H2O = S-adenosyl-L-methionine + phosphate + diphosphate. The protein operates within amino-acid biosynthesis; S-adenosyl-L-methionine biosynthesis; S-adenosyl-L-methionine from L-methionine: step 1/1. In terms of biological role, catalyzes the formation of S-adenosylmethionine (AdoMet) from methionine and ATP. The overall synthetic reaction is composed of two sequential steps, AdoMet formation and the subsequent tripolyphosphate hydrolysis which occurs prior to release of AdoMet from the enzyme. This is S-adenosylmethionine synthase from Synechocystis sp. (strain ATCC 27184 / PCC 6803 / Kazusa).